The primary structure comprises 215 residues: GTP-binding nuclear protein Ran (215 aa).

Residues 6–170 form the Small GTPase Ran-type domain; the sequence is DIPTFKLVLV…LWLARKLLGD (165 aa). GTP-binding positions include 17 to 24, 35 to 41, Gly67, 121 to 124, and 149 to 151; these read DGGTGKTT, EKKYVAT, NKVD, and SAK. The switch-I stretch occupies residues 36 to 44; it reads KKYVATLGV. The segment at 67–83 is switch-II; it reads GQEKFGGLRDGYYIQGQ.

Belongs to the small GTPase superfamily. Ran family. As to quaternary structure, found in a nuclear export complex with RanGTP, exportin and pre-miRNA.

It is found in the nucleus. Its function is as follows. GTP-binding protein involved in nucleocytoplasmic transport. Required for the import of protein into the nucleus and also for RNA export. Involved in chromatin condensation and control of cell cycle. The polypeptide is GTP-binding nuclear protein Ran (Brugia malayi (Filarial nematode worm)).